Consider the following 379-residue polypeptide: Cytochrome b (379 aa).

4 helical membrane passes run Phe33–Met53, Trp77–Val98, Trp113–Leu133, and Phe178–Leu198. His83 and His97 together coordinate heme b. His182 and His196 together coordinate heme b. Residue His201 participates in a ubiquinone binding. 4 helical membrane passes run Ile226–Phe246, Leu288–Asn308, Ile320–Gly340, and Phe347–Pro367.

It belongs to the cytochrome b family. The cytochrome bc1 complex contains 11 subunits: 3 respiratory subunits (MT-CYB, CYC1 and UQCRFS1), 2 core proteins (UQCRC1 and UQCRC2) and 6 low-molecular weight proteins (UQCRH/QCR6, UQCRB/QCR7, UQCRQ/QCR8, UQCR10/QCR9, UQCR11/QCR10 and a cleavage product of UQCRFS1). This cytochrome bc1 complex then forms a dimer. The cofactor is heme b.

The protein resides in the mitochondrion inner membrane. In terms of biological role, component of the ubiquinol-cytochrome c reductase complex (complex III or cytochrome b-c1 complex) that is part of the mitochondrial respiratory chain. The b-c1 complex mediates electron transfer from ubiquinol to cytochrome c. Contributes to the generation of a proton gradient across the mitochondrial membrane that is then used for ATP synthesis. In Necromys amoenus (Pleasant bolo mouse), this protein is Cytochrome b (MT-CYB).